Reading from the N-terminus, the 194-residue chain is MKRSNSIAVMLVLVLSSLMLLLPVEGQGHEGHGVGEILLMGKLGAPVCGVRASGRVCPDGYCCSQWGYCGTTEEYCGKGCQSQCDYNRCGKEFGGKECHDELCCSQYGWCGNSDGHCGEGCQSQCSYWRCGKDFGGRLCTEDMCCSQYGWCGLTDDHCEDGCQSQCDLPTLLPSPLRRIIAIRKLKANLANMLS.

A signal peptide spans 1–26 (MKRSNSIAVMLVLVLSSLMLLLPVEG). A propeptide spans 27–44 (QGHEGHGVGEILLMGKLG) (removed in mature form). Chitin-binding type-1 domains lie at 45–86 (APVC…QCDY), 87–127 (NRCG…QCSY), and 128–168 (WRCG…QCDL). 12 disulfides stabilise this stretch: Cys-48–Cys-63, Cys-57–Cys-69, Cys-62–Cys-76, Cys-80–Cys-84, Cys-89–Cys-104, Cys-98–Cys-110, Cys-103–Cys-117, Cys-121–Cys-125, Cys-130–Cys-145, Cys-139–Cys-151, Cys-144–Cys-158, and Cys-162–Cys-166. Positions 171-194 (LLPSPLRRIIAIRKLKANLANMLS) are cleaved as a propeptide — removed in mature form.

As to quaternary structure, homodimer. The homodimers are asymmetric; formed in a 'head-to-tail' fashion via hydrophobic interactions between aromatic residues of the carbohydrate-binding sites of each subunit.

N-acetyl-D-glucosamine binding lectin. Almost no hemagglutinating activity towards human erythrocytes. Low mitogenic activity towards human peripheral blood lymphocytes. The protein is Lectin-C of Phytolacca americana (American pokeweed).